The primary structure comprises 210 residues: Thymidylate kinase (210 aa).

10-17 (GPEGAGKS) provides a ligand contact to ATP.

Belongs to the thymidylate kinase family.

The enzyme catalyses dTMP + ATP = dTDP + ADP. Its function is as follows. Phosphorylation of dTMP to form dTDP in both de novo and salvage pathways of dTTP synthesis. The protein is Thymidylate kinase of Pseudomonas putida (strain GB-1).